The primary structure comprises 836 residues: Neuroligin-2 (836 aa).

Residues 1 to 14 form the signal peptide; it reads MWLLALCLVGLAGA. Over 15 to 678 the chain is Extracellular; that stretch reads QRGGGGPGGG…DSRDYSTELS (664 aa). Asparagine 98 and asparagine 136 each carry an N-linked (GlcNAc...) asparagine glycan. 3 cysteine pairs are disulfide-bonded: cysteine 106/cysteine 141, cysteine 317/cysteine 328, and cysteine 487/cysteine 521. Asparagine 522 is a glycosylation site (N-linked (GlcNAc...) asparagine). The tract at residues 623–661 is disordered; that stretch reads PPYATRWPPRTPGPGTSGTRRPPPPATLPPESDIDLGPR. Residues 679 to 699 form a helical membrane-spanning segment; that stretch reads VTVAVGASLLFLNILAFAALY. Residues 679–699 are required for interaction with LHFPL4; it reads VTVAVGASLLFLNILAFAALY. At 700–836 the chain is on the cytoplasmic side; it reads YKRDRRQELR…LPHPHSTTRV (137 aa). Disordered stretches follow at residues 711 to 735 and 791 to 836; these read RRLS…TAGR and LLPS…TTRV. Residues serine 714 and serine 719 each carry the phosphoserine modification. Residues 717–728 show a composition bias toward gly residues; that stretch reads GGSGSGVPGGGP. Residues 796 to 819 show a composition bias toward pro residues; the sequence is LGPPPPPPPPSLHPFGPFPPPPPT. Positions 824–836 are enriched in polar residues; it reads NNTLPHPHSTTRV.

Belongs to the type-B carboxylesterase/lipase family. As to quaternary structure, interacts with neurexins NRXN1, NRXN2 and NRXN3. Interaction with neurexins is mediated by heparan sulfate glycan modification on neurexin. Interacts (via its C-terminus) with DLG4/PSD-95 (via PDZ domain 3). Interacts with PATJ. Interacts with MDGA2. Interacts with GPHN. Interacts with MDGA1. Found in a complex with MAGI2 and IGSF9B, where it interacts with MAGI2 (via WW 1, WW 2 and PDZ 2 domains). Identified in a complex of 720 kDa composed of LHFPL4, NLGN2, GABRA1, GABRB2, GABRG2 and GABRB3. Interacts with LHFPL4; leading to mutual regulation of the protein level and synaptic clustering. Interacts with GABRA1. As to expression, brain and arteries. Detected in the retina outer plexiform layer (at protein level). Widely expressed. Detected in heart, brain, spleen, lung, liver, skeletal muscle, kidney and testis.

Its subcellular location is the cell membrane. The protein localises to the postsynaptic cell membrane. The protein resides in the presynaptic cell membrane. Functionally, transmembrane scaffolding protein involved in cell-cell interactions via its interactions with neurexin family members. Mediates cell-cell interactions both in neurons and in other types of cells, such as Langerhans beta cells. Mediates cell-cell interactions between Langerhans beta cells and modulates insulin secretion. Plays a role in synapse function and synaptic signal transmission, especially via gamma-aminobutyric acid receptors (GABA(A) receptors). Functions by recruiting and clustering synaptic proteins. Promotes clustering of postsynaptic GABRG2 and GPHN. Promotes clustering of postsynaptic LHFPL4. Modulates signaling by inhibitory synapses, and thereby plays a role in controlling the ratio of signaling by excitatory and inhibitory synapses and information processing. Required for normal signal amplitude from inhibitory synapses, but is not essential for normal signal frequency. May promote the initial formation of synapses, but is not essential for this. In vitro, triggers the de novo formation of presynaptic structures. This Mus musculus (Mouse) protein is Neuroligin-2 (Nlgn2).